We begin with the raw amino-acid sequence, 486 residues long: Citrate synthase 3, mitochondrial (486 aa).

The N-terminal 23 residues, 1–23, are a transit peptide targeting the mitochondrion; the sequence is MVQRLLPGAHICRRSFNSSAIIK. Residues histidine 315, histidine 361, and aspartate 419 contribute to the active site. Positions 484–486 match the Microbody targeting signal motif; the sequence is NKL.

It belongs to the citrate synthase family.

It localises to the mitochondrion. It carries out the reaction oxaloacetate + acetyl-CoA + H2O = citrate + CoA + H(+). It participates in carbohydrate metabolism; tricarboxylic acid cycle; isocitrate from oxaloacetate: step 1/2. Its function is as follows. Dual specificity mitochondrial citrate and methylcitrate synthase with similar catalytic efficiency with both acetyl-CoA and propionyl-CoA. In Saccharomyces cerevisiae (strain ATCC 204508 / S288c) (Baker's yeast), this protein is Citrate synthase 3, mitochondrial.